Here is a 411-residue protein sequence, read N- to C-terminus: Envelope glycoprotein G (411 aa).

The signal sequence occupies residues Met-1–Gly-19. N-linked (GlcNAc...) asparagine; by host glycosylation is found at Asn-83, Asn-138, Asn-222, Asn-245, and Asn-317. Polar residues-rich tracts occupy residues Val-306–Pro-327 and Ser-334–Gly-345. The interval Val-306 to Gly-345 is disordered. The chain crosses the membrane as a helical span at residues Leu-364–Leu-384.

It belongs to the alphaherpesvirinae glycoprotein G family.

Its subcellular location is the virion membrane. Functionally, chemokine-binding protein that inhibits neutrophils' chemotaxis. The polypeptide is Envelope glycoprotein G (gG) (Equine herpesvirus 1 (strain Kentucky A) (EHV-1)).